Here is a 559-residue protein sequence, read N- to C-terminus: Formate--tetrahydrofolate ligase (559 aa).

Threonine 68–serine 75 lines the ATP pocket.

This sequence belongs to the formate--tetrahydrofolate ligase family.

It catalyses the reaction (6S)-5,6,7,8-tetrahydrofolate + formate + ATP = (6R)-10-formyltetrahydrofolate + ADP + phosphate. It functions in the pathway one-carbon metabolism; tetrahydrofolate interconversion. The sequence is that of Formate--tetrahydrofolate ligase from Clostridium tetani (strain Massachusetts / E88).